Reading from the N-terminus, the 522-residue chain is Sensory neuron membrane protein 1 (522 aa).

Residues 1-11 (MKLPKHLKFAA) are Cytoplasmic-facing. A helical transmembrane segment spans residues 12 to 32 (GAGGAFLFGILFGWVMFPAIL). Residues 33–455 (KGQLKKEMAL…KFQLFYPKKA (423 aa)) are Extracellular-facing. Asn-67 and Asn-229 each carry an N-linked (GlcNAc...) asparagine glycan. 3 disulfide bridges follow: Cys-268–Cys-333, Cys-297–Cys-350, and Cys-335–Cys-339. The N-linked (GlcNAc...) asparagine glycan is linked to Asn-438. A helical membrane pass occupies residues 456 to 476 (VGVIKWLLVTFGGFGLIGCTI). Over 477–522 (YHYKDRIMSFASSPGSAAVTKVKPEEVEQKDVSVIGQPQEPAKINM) the chain is Cytoplasmic.

Belongs to the CD36 family.

It is found in the cell membrane. Functionally, plays an olfactory role that is not restricted to pheromone sensitivity. The polypeptide is Sensory neuron membrane protein 1 (Plutella xylostella (Diamondback moth)).